The following is a 313-amino-acid chain: Ribosomal RNA small subunit methyltransferase H (313 aa).

S-adenosyl-L-methionine is bound by residues 51-53 (GGH), Asp-71, Phe-98, Asp-119, and Gln-126. Residues 293-313 (EEQRANPRSRSARLRVAERVS) form a disordered region.

The protein belongs to the methyltransferase superfamily. RsmH family.

The protein resides in the cytoplasm. It catalyses the reaction cytidine(1402) in 16S rRNA + S-adenosyl-L-methionine = N(4)-methylcytidine(1402) in 16S rRNA + S-adenosyl-L-homocysteine + H(+). Its function is as follows. Specifically methylates the N4 position of cytidine in position 1402 (C1402) of 16S rRNA. The protein is Ribosomal RNA small subunit methyltransferase H of Roseiflexus sp. (strain RS-1).